The sequence spans 176 residues: MGFPKEGEKVQIHSYKHNGSIHRMWEETTILKGTQSLVIGANDRTLVTESDGRTWITREPAICYFHANYWFNVIGMLREDGVYYYCNLSSPFAYDLEALKYIDYDLDIKVYPDMTYTLLDEDEYEKHSKMMKYPPVIDTILKRNVEYLRKWIHQRKGPFAPDFVDMWYERYLMYRD.

The active-site Proton donor is the arginine 23. Residues asparagine 87, aspartate 103, aspartate 105, aspartate 107, aspartate 120, and glutamate 123 each coordinate Mg(2+).

This sequence belongs to the Ntdp family. The cofactor is Mg(2+).

The enzyme catalyses a ribonucleoside 5'-triphosphate + H2O = a ribonucleoside 5'-diphosphate + phosphate + H(+). It catalyses the reaction a ribonucleoside 5'-diphosphate + H2O = a ribonucleoside 5'-phosphate + phosphate + H(+). Its function is as follows. Has nucleoside phosphatase activity towards nucleoside triphosphates and nucleoside diphosphates. This is Nucleoside triphosphate/diphosphate phosphatase from Bacillus cytotoxicus (strain DSM 22905 / CIP 110041 / 391-98 / NVH 391-98).